The chain runs to 290 residues: ATP synthase gamma chain (290 aa).

This sequence belongs to the ATPase gamma chain family. As to quaternary structure, F-type ATPases have 2 components, CF(1) - the catalytic core - and CF(0) - the membrane proton channel. CF(1) has five subunits: alpha(3), beta(3), gamma(1), delta(1), epsilon(1). CF(0) has three main subunits: a, b and c.

Its subcellular location is the cell inner membrane. Produces ATP from ADP in the presence of a proton gradient across the membrane. The gamma chain is believed to be important in regulating ATPase activity and the flow of protons through the CF(0) complex. The polypeptide is ATP synthase gamma chain (Anaeromyxobacter sp. (strain Fw109-5)).